Here is a 107-residue protein sequence, read N- to C-terminus: Integration host factor subunit alpha (107 aa).

Belongs to the bacterial histone-like protein family. Heterodimer of an alpha and a beta chain.

In terms of biological role, this protein is one of the two subunits of integration host factor, a specific DNA-binding protein that functions in genetic recombination as well as in transcriptional and translational control. The protein is Integration host factor subunit alpha of Brucella anthropi (strain ATCC 49188 / DSM 6882 / CCUG 24695 / JCM 21032 / LMG 3331 / NBRC 15819 / NCTC 12168 / Alc 37) (Ochrobactrum anthropi).